We begin with the raw amino-acid sequence, 269 residues long: Protein TORNADO 2 (269 aa).

Topologically, residues 1 to 10 (MPLSNNVIGC) are cytoplasmic. A helical membrane pass occupies residues 11-31 (INFITVLLSIPVIGAGIWLAI). Residues 32–44 (GTVNSCVKLLQWP) lie on the Extracellular side of the membrane. Residues 45–65 (VIILGVLILLVGLAGFIGGFW) traverse the membrane as a helical segment. Over 66-71 (RITWLL) the chain is Cytoplasmic. Residues 72–92 (VVYLIAMLILIVLLGCLVGFI) traverse the membrane as a helical segment. Topologically, residues 93-231 (YMVTIRGSGH…NIKVDWLKAD (139 aa)) are extracellular. The N-linked (GlcNAc...) asparagine glycan is linked to N200. A helical membrane pass occupies residues 232 to 252 (IFLLLALIGLIIVYIIGCCAF). At 253 to 269 (RNAETEDIFRKYKQGYT) the chain is on the cytoplasmic side.

This sequence belongs to the tetraspanin (TM4SF) family. As to expression, expressed in seedlings, roots, leaves, stems, apex, siliques and flowers. Present in ovules, prominently in nucellus and integuments.

The protein resides in the membrane. Functionally, involved in the basipetal transport of auxin (IAA) that modulates growth and organs organization, as well as cell differentiation. Regulates shoot apical meristem (SAM) organization in the peripheral zone. Required for initial meristematic divisions in the epidermal/lateral root cap leading to the formation of epidermal cells and a clone of lateral root cap cells, as well as for the maintenance of the radial pattern of cell specification in the root, thus regulating the distinction between the lateral root cap and epidermis. Together with WIH peptides, promotes megasporogenesis. This chain is Protein TORNADO 2 (TRN2), found in Arabidopsis thaliana (Mouse-ear cress).